The primary structure comprises 248 residues: Ubiquinone biosynthesis O-methyltransferase (248 aa).

Residues arginine 41, glycine 72, aspartate 93, and methionine 136 each coordinate S-adenosyl-L-methionine.

This sequence belongs to the methyltransferase superfamily. UbiG/COQ3 family.

It carries out the reaction a 3-demethylubiquinol + S-adenosyl-L-methionine = a ubiquinol + S-adenosyl-L-homocysteine + H(+). It catalyses the reaction a 3-(all-trans-polyprenyl)benzene-1,2-diol + S-adenosyl-L-methionine = a 2-methoxy-6-(all-trans-polyprenyl)phenol + S-adenosyl-L-homocysteine + H(+). It participates in cofactor biosynthesis; ubiquinone biosynthesis. Functionally, O-methyltransferase that catalyzes the 2 O-methylation steps in the ubiquinone biosynthetic pathway. This chain is Ubiquinone biosynthesis O-methyltransferase, found in Brucella melitensis biotype 2 (strain ATCC 23457).